We begin with the raw amino-acid sequence, 168 residues long: Transcriptional regulator MraZ (168 aa).

2 SpoVT-AbrB domains span residues 8–51 (EYNQ…GGDR) and 90–140 (ALNM…KADI).

Belongs to the MraZ family. Forms oligomers.

The protein resides in the cytoplasm. It is found in the nucleoid. The polypeptide is Transcriptional regulator MraZ (Cereibacter sphaeroides (strain KD131 / KCTC 12085) (Rhodobacter sphaeroides)).